A 1374-amino-acid polypeptide reads, in one-letter code: MAPTSTYSYTERKRIRKSFGSRDSVLKVPYLLQMQKDAYTAFLQADMAPQKRTNEGLQAAFNAAFPIVSHNGFVEMKFVEYNLAKPAFDVRECQTRGLTFASAVRAKVQLIIYDRESSTSQSKVVKEVKEQEVYMGEVPLMTDKGSFIINGTERVIVSQLHRSPGVFFEHDKGKTHSSGKLLFSARIIPYRGSWLDFEFDPKDILYFRVDRRRKMPVTILLKAIGLNPESILANFFVNDNFRLMDSGAQMEFVADRLKGEVARFDITDKSGKVVVAKDKRITARHTRELEQSGTTHISVPEDFLIGRVVARNIVDGDTGEIVAKANEELTEALLKKLRSAGVQDLQVIYTNELDQGAYISQTLRIDETVDEFAARVAIYRMMRPGEPPTEDAVQALFQRLFYNPDTYDLSRVGRMKFNAKIGRDESTGPMVLSNDDILAVVKILVDLRNGKGEVDDIDHLGNRRVRCVGELAENQYRTGLARIEKAVKERLGQAEQEPLMPHDLINSKPISAALKEFFGASQLSQFMDQTNPLAEITHKRRVSALGPGGLTRERAGFEVRDVHVTHYGRVCPIETPEGPNIGLINSLALYARLNEYGFIETPYRRVVDGKVTDQIDYLSAIEEGKYVIAQANAALDAEGRLTGDLVSAREKGESTLLSAERVQYMDVSPAQIVSVAASLVPFLEHDDANRALMGANMSRQAVPVLRPEKPMVGTGIERVAAVDSGTVVTANRGGIVDYVDATRIVVRVNDDEAVAGEVGVDIYNLIKYQRSNQNTNIHQRPIVKKGDVLAKGDVIADGASTDLGEIAIGQNMLIAFMPWNGYNFEDSILISERVVAEDRYTSIHIEELVVMARDTKLGAEEITRDIPNLSEQQLNRLDESGIIYVGAEVQPGDTLVGKVTPKGETTLTPEEKLLRAIFGEKASDVKDTSLRVDQGSSGTVIDVQVFTREGIQRDKRAQQIIDDELKRFRLDLNDQLRIVEADAFDRIEKLLNGRVANGGPQKLAKGTKIDKAYLASVEKFHWFDIRPAEDEVATQLESIKNALEQTRHSFDLAFEEKRKKLTQGDELPAGVLKMVKVYLAVKRRLQPGDKMAGRHGNKGVVSKIVPVEDMPYMADGTPADIVLNPLGVPSRMNIGQVLEVHLGWAGKGIGQRIGDMLRDQAKAAEMRKFLEEVYNSRGRKEDLSVLSDDEVMAMAANLTNGVPYATPVFDGASEAEIKDMLKLAYPDDIKERKGLTESRTQAYLYDGRTGERFERPTTIGYMHYLKLHHLVDDKMHARSTGPYSLVTQQPLGGKAQFGGQRFGEMEVWALEAYGASYVLQEMLTVKSDDVQGRTKVYESIVKGEHAIEAGMPESFNVLVKEIRSLGLDIELERS.

Belongs to the RNA polymerase beta chain family. The RNAP catalytic core consists of 2 alpha, 1 beta, 1 beta' and 1 omega subunit. When a sigma factor is associated with the core the holoenzyme is formed, which can initiate transcription.

It catalyses the reaction RNA(n) + a ribonucleoside 5'-triphosphate = RNA(n+1) + diphosphate. DNA-dependent RNA polymerase catalyzes the transcription of DNA into RNA using the four ribonucleoside triphosphates as substrates. The polypeptide is DNA-directed RNA polymerase subunit beta (Paracidovorax citrulli (strain AAC00-1) (Acidovorax citrulli)).